A 102-amino-acid chain; its full sequence is Putative septation protein SpoVG 1 (102 aa).

The protein belongs to the SpoVG family.

Functionally, could be involved in septation. This chain is Putative septation protein SpoVG 1, found in Listeria innocua serovar 6a (strain ATCC BAA-680 / CLIP 11262).